We begin with the raw amino-acid sequence, 178 residues long: MARLIWLTGPSGSGKDSLLDALRAAPPPRLLIAHRYITRAADAGGENHVALTETEFDRRAALGLFAVSWEAHGFRYGIGCETEQWLLRGQNVVVNGSRLHLAQAQARFGSQLLPVCLQVTPAVLAARLRQRGREDEAEIARRLARAAQPQPDGCLILNNDGALAETVCQLRQILELHQ.

Gly-9–Asp-16 contacts ATP.

It belongs to the ribose 1,5-bisphosphokinase family.

The enzyme catalyses alpha-D-ribose 1,5-bisphosphate + ATP = 5-phospho-alpha-D-ribose 1-diphosphate + ADP. It functions in the pathway metabolic intermediate biosynthesis; 5-phospho-alpha-D-ribose 1-diphosphate biosynthesis; 5-phospho-alpha-D-ribose 1-diphosphate from D-ribose 5-phosphate (route II): step 3/3. Its function is as follows. Catalyzes the phosphorylation of ribose 1,5-bisphosphate to 5-phospho-D-ribosyl alpha-1-diphosphate (PRPP). The polypeptide is Ribose 1,5-bisphosphate phosphokinase PhnN (Pantoea vagans (strain C9-1) (Pantoea agglomerans (strain C9-1))).